Consider the following 951-residue polypeptide: Valine--tRNA ligase (951 aa).

The 'HIGH' region signature appears at 42–52 (PNVTGSLHMGH). The 'KMSKS' region motif lies at 554 to 558 (KMSKS). ATP is bound at residue K557. Residues 880 to 944 (AGLINKEDEL…AEAKAKLIEQ (65 aa)) adopt a coiled-coil conformation.

Belongs to the class-I aminoacyl-tRNA synthetase family. ValS type 1 subfamily. In terms of assembly, monomer.

The protein resides in the cytoplasm. It catalyses the reaction tRNA(Val) + L-valine + ATP = L-valyl-tRNA(Val) + AMP + diphosphate. Its function is as follows. Catalyzes the attachment of valine to tRNA(Val). As ValRS can inadvertently accommodate and process structurally similar amino acids such as threonine, to avoid such errors, it has a 'posttransfer' editing activity that hydrolyzes mischarged Thr-tRNA(Val) in a tRNA-dependent manner. The protein is Valine--tRNA ligase of Escherichia coli O6:H1 (strain CFT073 / ATCC 700928 / UPEC).